The chain runs to 516 residues: GMP synthase [glutamine-hydrolyzing] (516 aa).

The Glutamine amidotransferase type-1 domain occupies 6–199; the sequence is KVLILDFGSQ…LFEIAGLTSG (194 aa). Cys83 serves as the catalytic Nucleophile. Residues His173 and Glu175 contribute to the active site. In terms of domain architecture, GMPS ATP-PPase spans 200–391; the sequence is WTMSSFLETE…LGMPDFIIWR (192 aa). An ATP-binding site is contributed by 227–233; that stretch reads SGGVDST.

Homodimer.

It carries out the reaction XMP + L-glutamine + ATP + H2O = GMP + L-glutamate + AMP + diphosphate + 2 H(+). The protein operates within purine metabolism; GMP biosynthesis; GMP from XMP (L-Gln route): step 1/1. Its function is as follows. Catalyzes the synthesis of GMP from XMP. This is GMP synthase [glutamine-hydrolyzing] from Solidesulfovibrio magneticus (strain ATCC 700980 / DSM 13731 / RS-1) (Desulfovibrio magneticus).